Reading from the N-terminus, the 295-residue chain is Hydroxyquinol 1,2-dioxygenase (295 aa).

Fe cation contacts are provided by Tyr-165, Tyr-200, His-224, and His-226.

The protein belongs to the intradiol ring-cleavage dioxygenase family. The cofactor is Fe(3+).

The catalysed reaction is benzene-1,2,4-triol + O2 = maleylacetate + 2 H(+). It participates in aromatic compound metabolism. Its function is as follows. Involved in the gamma-resorcylate (2,6-dihydroxybenzoate) catabolism. Catalyzes the conversion of hydroxyquinol to malelylacetate. The chain is Hydroxyquinol 1,2-dioxygenase from Rhizobium sp. (strain MTP-10005).